Here is a 439-residue protein sequence, read N- to C-terminus: Packaging protein 1 (439 aa).

Positions 1–23 (MSTQIPARQETYDPSQSSGTKTP) are enriched in polar residues. The interval 1–42 (MSTQIPARQETYDPSQSSGTKTPSHPYDGNPTRSYPKRNAGK) is disordered. Residue 151-158 (GPTGSGKS) participates in ATP binding. Residues 419-439 (ERNPKLTDLEKLSPPGTFQET) are DNA-binding.

It belongs to the adenoviridae packaging protein 1 family. As to quaternary structure, homodimer. Part of a genome packaging complex composed of packaging proteins 1, 2 and 3; this complex specifically binds to the packaging sequence on the left end of viral genomic DNA and performs packaging of the viral genome. Interacts with protein 33K.

It localises to the virion. It is found in the host nucleus. The protein resides in the host nucleoplasm. The protein localises to the host nucleolus. Component of the packaging machinery which encapsidates the viral DNA into preformed capsids and transcriptional activator of the viral major late promoter (MLP). Binds, along with packaging proteins 2 and 3, to the specific packaging sequence on the left end of viral genomic DNA and displays ATPase activity thereby providing the power stroke of the packaging machinery. The activity of packaging protein IVa2 is stimulated by protein 33K which acts as a terminase. May be the protein that pumps DNA into the capsid powered by ATP hydrolysis. Specifically binds to the 5'-CG-3' nucleotides of the repeats making up the packaging sequence. Component of the DEF-A and DEF-B transcription factors that bind downstream elements of the major late promoter (MLP), and stimulate transcription from the MLP after initiation of viral DNA replication. DEF-A is a heterodimer packaging proteins 1 and 2 and DEF-B is a homodimer of packaging protein 1. This is Packaging protein 1 from Fowl adenovirus A serotype 1 (strain CELO / Phelps) (FAdV-1).